The chain runs to 303 residues: Cytidine deaminase (303 aa).

CMP/dCMP-type deaminase domains are found at residues 57-172 and 196-303; these read TDKE…YLPD and ITED…IQVS. Residue 98–100 participates in substrate binding; sequence NQE. Histidine 111 contacts Zn(2+). Glutamate 113 acts as the Proton donor in catalysis. 2 residues coordinate Zn(2+): cysteine 138 and cysteine 141.

The protein belongs to the cytidine and deoxycytidylate deaminase family. As to quaternary structure, homodimer. Zn(2+) serves as cofactor.

The catalysed reaction is cytidine + H2O + H(+) = uridine + NH4(+). It carries out the reaction 2'-deoxycytidine + H2O + H(+) = 2'-deoxyuridine + NH4(+). In terms of biological role, this enzyme scavenges exogenous and endogenous cytidine and 2'-deoxycytidine for UMP synthesis. In Histophilus somni (strain 2336) (Haemophilus somnus), this protein is Cytidine deaminase.